The following is a 325-amino-acid chain: Quinone oxidoreductase (325 aa).

It belongs to the zinc-containing alcohol dehydrogenase family. Quinone oxidoreductase subfamily.

The catalysed reaction is 2 a quinone + NADPH + H(+) = 2 a 1,4-benzosemiquinone + NADP(+). This Pseudomonas aeruginosa (strain ATCC 15692 / DSM 22644 / CIP 104116 / JCM 14847 / LMG 12228 / 1C / PRS 101 / PAO1) protein is Quinone oxidoreductase (qor).